Here is a 139-residue protein sequence, read N- to C-terminus: MKSCVLSNYVEGLEIIVCGYRNRLLFPFRATQVQAYFKVFSFFFFLLLTLGAAAAAKPTSERQVIFGSADKSPGYHWPVEVSAAWNYRELLCKTIGNLVGKPCSRTWRLLTKKKRAYCCCLFCCSSSYCLAGVLCVFCV.

2 consecutive transmembrane segments (helical) span residues A35–A55 and C119–V139.

It localises to the membrane. This is an uncharacterized protein from Saccharomyces cerevisiae (strain ATCC 204508 / S288c) (Baker's yeast).